Consider the following 267-residue polypeptide: DNA repair protein RecO (267 aa).

The protein belongs to the RecO family.

Functionally, involved in DNA repair and RecF pathway recombination. This chain is DNA repair protein RecO, found in Prochlorococcus marinus (strain MIT 9313).